The primary structure comprises 4134 residues: DNA-dependent protein kinase catalytic subunit (4134 aa).

HEAT repeat units lie at residues 900 to 937 (VIYL…VAYM), 1000 to 1036 (QDTV…LKWS), and 1050 to 1085 (ANTK…YREF). TPR repeat units lie at residues 1265–1305 (YNTF…HDIH) and 1722–1755 (PMSS…SQSP). The residue at position 2055 (Ser2055) is a Phosphoserine; by autocatalysis. The TPR 3 repeat unit spans residues 2207–2240 (DEILANRLLEFLMKNAFHQKRAVFRHNLEIIKTV). Thr2609 bears the Phosphothreonine; by autocatalysis mark. Residues 2611-2629 (ASQSTNRNSSQERSLSISG) are compositionally biased toward polar residues. Positions 2611-2631 (ASQSTNRNSSQERSLSISGSV) are disordered. Ser2612 carries the phosphoserine; by autocatalysis modification. Residues Thr2638 and Thr2647 each carry the phosphothreonine; by autocatalysis modification. The region spanning 2880-3545 (NVSTSCLASL…IYPFTISSES (666 aa)) is the FAT domain. The 332-residue stretch at 3728-4059 (FDERIMVLES…VSYVKRKLTG (332 aa)) folds into the PI3K/PI4K catalytic domain. A G-loop region spans residues 3734–3740 (VLESLRK). A catalytic loop region spans residues 3925–3933 (GIGDRHLSN). Positions 3945-3970 (GIDFGHAFGSATQFLPVPELMPFRLT) are activation loop. The FATC domain occupies 4102-4134 (DRLSEETQVRCLIDQATDPNLLGRVWEGWEPWM).

It belongs to the PI3/PI4-kinase family. DNA-PK is a heterotrimer of PRKDC and the Ku dimer (composed of XRCC6/Ku70 and XRCC5/Ku86). Component of the core long-range non-homologous end joining (NHEJ) complex (also named DNA-PK complex) composed of PRKDC, LIG4, XRCC4, XRCC6/Ku70, XRCC5/Ku86 and NHEJ1/XLF. Additional component of the NHEJ complex includes PAXX. Following autophosphorylation, PRKDC dissociates from DNA. Post-translationally, autophosphorylated at two clusters, the T2609 cluster and the S2056 cluster. Autophosphorylated on Ser-2055, Thr-2609, Thr-2638 and Thr-2647. Ser-2055 and Thr-2609 are DNA damage-inducible phosphorylation sites (inducible with ionizing radiation, IR) dephosphorylated by PPP5C. Autophosphorylation induces a conformational change that leads to remodeling of the DNA-PK complex, requisite for efficient end processing and DNA repair. Autophosphorylation in trans within DNA-PK complexes loaded on DNA ends leads to the dissociation of PRKDC from DNA and the transition into the short-range NHEJ complex. Autophosphorylation of the T2609 cluster is required for hematopoietic development and protein synthesis in erythrocytes precursors.

It localises to the nucleus. The protein resides in the nucleolus. The catalysed reaction is L-seryl-[protein] + ATP = O-phospho-L-seryl-[protein] + ADP + H(+). It carries out the reaction L-threonyl-[protein] + ATP = O-phospho-L-threonyl-[protein] + ADP + H(+). Its function is as follows. Serine/threonine-protein kinase that acts as a molecular sensor for DNA damage. Involved in DNA nonhomologous end joining (NHEJ) required for double-strand break (DSB) repair and V(D)J recombination. Must be bound to DNA to express its catalytic properties. Promotes processing of hairpin DNA structures in V(D)J recombination by activation of the hairpin endonuclease artemis (DCLRE1C). Recruited by XRCC5 and XRCC6 to DNA ends and is required to (1) protect and align broken ends of DNA, thereby preventing their degradation, (2) and sequester the DSB for repair by NHEJ. Acts as a scaffold protein to aid the localization of DNA repair proteins to the site of damage. The assembly of the DNA-PK complex at DNA ends is also required for the NHEJ ligation step. Found at the ends of chromosomes, suggesting a further role in the maintenance of telomeric stability and the prevention of chromosomal end fusion. As part of the DNA-PK complex, involved in the early steps of ribosome assembly by promoting the processing of precursor rRNA into mature 18S rRNA in the small-subunit processome. Recognizes the substrate consensus sequence [ST]-Q. Phosphorylates 'Ser-139' of histone variant H2AX, thereby regulating DNA damage response mechanism. This chain is DNA-dependent protein kinase catalytic subunit (PRKDC), found in Gallus gallus (Chicken).